A 245-amino-acid chain; its full sequence is tRNA1(Val) (adenine(37)-N6)-methyltransferase (245 aa).

It belongs to the methyltransferase superfamily. tRNA (adenine-N(6)-)-methyltransferase family.

It is found in the cytoplasm. The catalysed reaction is adenosine(37) in tRNA1(Val) + S-adenosyl-L-methionine = N(6)-methyladenosine(37) in tRNA1(Val) + S-adenosyl-L-homocysteine + H(+). In terms of biological role, specifically methylates the adenine in position 37 of tRNA(1)(Val) (anticodon cmo5UAC). This Shigella boydii serotype 18 (strain CDC 3083-94 / BS512) protein is tRNA1(Val) (adenine(37)-N6)-methyltransferase.